A 152-amino-acid polypeptide reads, in one-letter code: Nucleoside diphosphate kinase B (152 aa).

The segment at 1–66 (MANLERTFIA…DRPFFPGLVK (66 aa)) is interaction with AKAP13. Residues Lys-12, Phe-60, Arg-88, Thr-94, Arg-105, and Asn-115 each contribute to the ATP site. Catalysis depends on His-118, which acts as the Pros-phosphohistidine intermediate.

It belongs to the NDK family. In terms of assembly, hexamer of two different chains: An and B (A6, A5B, A4B2, A3B3, A2B4, AB5, B6). Interacts with CAPN8. Interacts with AKAP13. Interacts with ITGB1BP1 (via C-terminal domain region). Interacts with BCL2L10. Requires Mg(2+) as cofactor. Post-translationally, the N-terminus is blocked.

Its subcellular location is the cytoplasm. The protein resides in the cell projection. It is found in the lamellipodium. The protein localises to the ruffle. It localises to the nucleus. It carries out the reaction a 2'-deoxyribonucleoside 5'-diphosphate + ATP = a 2'-deoxyribonucleoside 5'-triphosphate + ADP. The catalysed reaction is a ribonucleoside 5'-diphosphate + ATP = a ribonucleoside 5'-triphosphate + ADP. The enzyme catalyses ATP + protein L-histidine = ADP + protein N-phospho-L-histidine.. Major role in the synthesis of nucleoside triphosphates other than ATP. The ATP gamma phosphate is transferred to the NDP beta phosphate via a ping-pong mechanism, using a phosphorylated active-site intermediate. Negatively regulates Rho activity by interacting with AKAP13/LBC. Acts as a transcriptional activator of the MYC gene; binds DNA non-specifically. Binds to both single-stranded guanine- and cytosine-rich strands within the nuclease hypersensitive element (NHE) III(1) region of the MYC gene promoter. Does not bind to duplex NHE III(1). Has G-quadruplex (G4) DNA-binding activity, which is independent of its nucleotide-binding and kinase activity. Binds both folded and unfolded G4 with similar low nanomolar affinities. Stabilizes folded G4s regardless of whether they are prefolded or not. Exhibits histidine protein kinase activity. The chain is Nucleoside diphosphate kinase B (Nme2) from Rattus norvegicus (Rat).